A 190-amino-acid polypeptide reads, in one-letter code: Pancreatic IgW, short secretory form (190 aa).

The region spanning 53–145 (PNITALVPSV…PPSNFRSMIS (93 aa)) is the Ig-like C1-type domain. A glycan (N-linked (GlcNAc...) asparagine) is linked at Asn-54. Cys-74 and Cys-131 are disulfide-bonded. N-linked (GlcNAc...) asparagine glycosylation is present at Asn-179.

Expressed in pancreas, spleen, epigonal organ and at low levels in several other tissues.

It localises to the secreted. The polypeptide is Pancreatic IgW, short secretory form (Ginglymostoma cirratum (Nurse shark)).